The primary structure comprises 807 residues: Putative transmembrane protein ORF807 (807 aa).

5 helical membrane passes run 210 to 230 (VLMLICLLIYAGCYASYSDIL), 234 to 254 (GLSTVGAGVNAKVPVTAIVYF), 270 to 290 (VTIQLYALIWVGISTTNFVIL), 459 to 479 (ILIGVGAVALIVIGTVALVLT), and 657 to 677 (VALLSAIASILVNMFLFMPLV).

The protein resides in the host membrane. The polypeptide is Putative transmembrane protein ORF807 (Acidianus filamentous virus 1 (isolate United States/Yellowstone) (AFV-1)).